The primary structure comprises 664 residues: Translation factor GUF1, mitochondrial (664 aa).

The tr-type G domain maps to 63-246 (SNYRNFSIVA…SIINNIPPPQ (184 aa)). Residues 72 to 79 (AHVDHGKS), 139 to 143 (DTPGH), and 193 to 196 (NKID) contribute to the GTP site.

The protein belongs to the TRAFAC class translation factor GTPase superfamily. Classic translation factor GTPase family. LepA subfamily.

The protein resides in the mitochondrion inner membrane. It catalyses the reaction GTP + H2O = GDP + phosphate + H(+). Functionally, promotes mitochondrial protein synthesis. May act as a fidelity factor of the translation reaction, by catalyzing a one-codon backward translocation of tRNAs on improperly translocated ribosomes. Binds to mitochondrial ribosomes in a GTP-dependent manner. In Clavispora lusitaniae (strain ATCC 42720) (Yeast), this protein is Translation factor GUF1, mitochondrial.